The chain runs to 49 residues: L-amino-acid oxidase (49 aa).

43 to 44 (MS) serves as a coordination point for FAD.

This sequence belongs to the flavin monoamine oxidase family. FIG1 subfamily. As to quaternary structure, homodimer; non-covalently linked. Requires FAD as cofactor. N-glycosylated. Expressed by the venom gland.

The protein resides in the secreted. It catalyses the reaction an L-alpha-amino acid + O2 + H2O = a 2-oxocarboxylate + H2O2 + NH4(+). It carries out the reaction L-leucine + O2 + H2O = 4-methyl-2-oxopentanoate + H2O2 + NH4(+). Catalyzes an oxidative deamination of predominantly hydrophobic and aromatic L-amino acids, thus producing hydrogen peroxide that may contribute to the diverse toxic effects of this enzyme. Shows activity on L-Leu. Exhibits diverse biological activities, such as hemorrhage, hemolysis, edema, antibacterial and antiparasitic activities, as well as regulation of platelet aggregation. Its effect on platelets is controversial, since it either induces aggregation or inhibits agonist-induced aggregation. These different effects are probably due to different experimental conditions. In addition, this protein induces apoptosis and necrosis and has inhibitory effects on rat kidney function (decrease of blood flow and glomerular filtration). This Bothrops insularis (Golden lancehead) protein is L-amino-acid oxidase.